A 249-amino-acid polypeptide reads, in one-letter code: Tetrahydromethanopterin S-methyltransferase subunit A (249 aa).

Topologically, residues 2 to 225 are cytoplasmic; it reads PEKAEPAEGW…YMAGYLSGRT (224 aa). Histidine 88 lines the 5-hydroxybenzimidazolylcob(I)amide pocket. A helical membrane pass occupies residues 226–246; it reads MGLLIGIISGMIFLFLPMVVL. Over 247-249 the chain is Extracellular; it reads GGV.

It belongs to the MtrA family. The complex is composed of 8 subunits; MtrA, MtrB, MtrC, MtrD, MtrE, MtrF, MtrG and MtrH. 5-hydroxybenzimidazolylcob(I)amide serves as cofactor.

The protein resides in the cell membrane. It catalyses the reaction 5-methyl-5,6,7,8-tetrahydromethanopterin + coenzyme M + 2 Na(+)(in) = 5,6,7,8-tetrahydromethanopterin + methyl-coenzyme M + 2 Na(+)(out). It participates in one-carbon metabolism; methanogenesis from CO(2); methyl-coenzyme M from 5,10-methylene-5,6,7,8-tetrahydromethanopterin: step 2/2. Its function is as follows. Part of a complex that catalyzes the formation of methyl-coenzyme M and tetrahydromethanopterin from coenzyme M and methyl-tetrahydromethanopterin. This is an energy-conserving, sodium-ion translocating step. The sequence is that of Tetrahydromethanopterin S-methyltransferase subunit A from Methanopyrus kandleri (strain AV19 / DSM 6324 / JCM 9639 / NBRC 100938).